Reading from the N-terminus, the 67-residue chain is DNA-directed RNA polymerase subunit omega (67 aa).

The protein belongs to the RNA polymerase subunit omega family. As to quaternary structure, the RNAP catalytic core consists of 2 alpha, 1 beta, 1 beta' and 1 omega subunit. When a sigma factor is associated with the core the holoenzyme is formed, which can initiate transcription.

The enzyme catalyses RNA(n) + a ribonucleoside 5'-triphosphate = RNA(n+1) + diphosphate. Functionally, promotes RNA polymerase assembly. Latches the N- and C-terminal regions of the beta' subunit thereby facilitating its interaction with the beta and alpha subunits. The polypeptide is DNA-directed RNA polymerase subunit omega (Bacillus velezensis (strain DSM 23117 / BGSC 10A6 / LMG 26770 / FZB42) (Bacillus amyloliquefaciens subsp. plantarum)).